The sequence spans 727 residues: Broad-complex core protein isoforms 1/2/3/4/5 (727 aa).

Residues 32 to 97 (VDVTLACEGR…IYHGEVNVHQ (66 aa)) form the BTB domain. Residues 135-149 (NSGGRTPLNTHTQSL) are compositionally biased toward polar residues. Disordered stretches follow at residues 135-185 (NSGG…SLPS), 218-378 (RGSD…IGDG), 445-496 (INNS…RPTA), 532-583 (PQQQ…ANTP), and 604-626 (STSG…SGGL). A compositionally biased stretch (low complexity) spans 227–238 (SGAVGSGSNNNS). A compositionally biased stretch (gly residues) spans 281–298 (TGNGNSGNGNGNGNGASN). Basic and acidic residues predominate over residues 341–355 (NDEHSNDSTGEHDAN). Composition is skewed to low complexity over residues 445–460 (INNS…NNNN), 475–495 (TPSP…TRPT), and 533–568 (QQQQ…QQQQ). 2 consecutive C2H2-type zinc fingers follow at residues 636 to 659 (FRCN…QNVH) and 666 to 689 (PVCN…SIYH). Residues 694–727 (QPKQEPGVGATQAAANSFYHQQHQQQQLNHHSSS) are disordered. A compositionally biased stretch (low complexity) spans 713-727 (HQQHQQQQLNHHSSS).

The protein localises to the nucleus. Its function is as follows. Broad-complex proteins are required for puffing and transcription of salivary gland late genes during metamorphosis. This is Broad-complex core protein isoforms 1/2/3/4/5 (br) from Drosophila melanogaster (Fruit fly).